A 993-amino-acid chain; its full sequence is MGSGRVPGLCLLLLLVHARAAQHGKAAQDVDECVEGTDNCHIDAICQNTPRSYKCICKSGYTGDGKHCKDVDECEREDNAGCVHDCVNIPGNYRCTCYDGFHLAHDGHNCLDVDECAEGNGGCQQSCVNMMGSYECHCRDGFFLSDNQHTCIQRPEEGMNCMNKNHGCAHICRETPKGGIACECRPGFELTKNQRDCKLTCNYGNGGCQHTCDDTEQGPRCGCHVKFVLHTDGKTCIETCAVNNGGCDSKCHDAATGVHCSCPVGFMLQPDRKTCKDIDECRLNNGGCDHICRNTVGSFECSCKKGYKLLINERSCQDIDECSFDRTCDHMCVNTPGSFQCLCHRGYLLYGVTHCGDVDECSINKGGCRFGCINTPGSYQCTCPAGQGRLHWNGKDCTEPVKCQSSLGASKAMLSCNRSGKKDTCALTCPSRARFLPESENGFTVSCGTPSPKAAPARVIHSGNSTVSSSCHEAAVLPVKQRASFKIKDAKCRLHLRNKGKAEEASRILGPGSVPCSDCLVTFIHLKCDSSRKGKGRRARTPPGKEVTRLTLELEAEVRAEETTAGCGLPCLRQRMERRLKGSLKMLRKSINQDRFLLRLAGLDYELAHKPGLGAGDRAELVEVCRPGQHRAGTKCVSCPQGTYYHGQTEQCVPCPAGTFQEREGQLSCDLCPGSDAHGPLGATNVTTCAGQCPPGHHSGDGFKPCQPCPRGTYQPEAGRTLCFPCGGGLTTKHEGAVSFQDCDTKVQCSPGHYYNTSIHRCIRCAVGSYQPDFRQNFCTRCPGNTSTDFDGSTSVAQCKNRQCGGELGEFTGYIESPNYPGNYPAGVECVWNINPPPKRKILIVVPEIFLPSEDECGDVLVMRKNSSPSSITTYETCQTYERPIAFTARSRKLWINFKTSEANSARGFQIPYVTYDEDYEQLVEDIVRDGRLYASENHQEILKDKKLIKAFFEVLAHPQNYFKYTEKHKEMLPKSFIKLLRSKVSSFLRPYK.

The signal sequence occupies residues 1-20; that stretch reads MGSGRVPGLCLLLLLVHARA. The EGF-like 1; calcium-binding domain occupies 29-69; that stretch reads DVDECVEGTDNCHIDAICQNTPRSYKCICKSGYTGDGKHCK. 26 cysteine pairs are disulfide-bonded: cysteine 33/cysteine 46, cysteine 40/cysteine 55, cysteine 57/cysteine 68, cysteine 74/cysteine 86, cysteine 82/cysteine 95, cysteine 97/cysteine 110, cysteine 116/cysteine 127, cysteine 123/cysteine 136, cysteine 161/cysteine 172, cysteine 168/cysteine 182, cysteine 184/cysteine 197, cysteine 201/cysteine 212, cysteine 208/cysteine 221, cysteine 223/cysteine 236, cysteine 240/cysteine 251, cysteine 247/cysteine 260, cysteine 262/cysteine 275, cysteine 281/cysteine 292, cysteine 288/cysteine 301, cysteine 303/cysteine 316, cysteine 322/cysteine 332, cysteine 328/cysteine 341, cysteine 343/cysteine 355, cysteine 361/cysteine 372, cysteine 368/cysteine 381, and cysteine 383/cysteine 397. The region spanning 70 to 111 is the EGF-like 2; calcium-binding domain; sequence DVDECEREDNAGCVHDCVNIPGNYRCTCYDGFHLAHDGHNCL. The EGF-like 3; calcium-binding domain occupies 112 to 148; the sequence is DVDECAEGNGGCQQSCVNMMGSYECHCRDGFFLSDNQ. EGF-like domains follow at residues 157–198, 199–237, and 238–276; these read EGMN…RDCK, LTCNYGNGGCQHTCDDTEQGPRCGCHVKFVLHTDGKTCI, and ETCAVNNGGCDSKCHDAATGVHCSCPVGFMLQPDRKTCK. An EGF-like 7; calcium-binding domain is found at 277–317; the sequence is DIDECRLNNGGCDHICRNTVGSFECSCKKGYKLLINERSCQ. Residues 318-356 form the EGF-like 8; calcium-binding domain; the sequence is DIDECSFDRTCDHMCVNTPGSFQCLCHRGYLLYGVTHCG. Residues 357-398 enclose the EGF-like 9; calcium-binding domain; that stretch reads DVDECSINKGGCRFGCINTPGSYQCTCPAGQGRLHWNGKDCT. Asparagine 417, asparagine 464, asparagine 685, asparagine 756, and asparagine 785 each carry an N-linked (GlcNAc...) asparagine glycan. Cystine bridges form between cysteine 804–cysteine 830 and cysteine 857–cysteine 878. A CUB domain is found at 804 to 916; it reads CGGELGEFTG…RGFQIPYVTY (113 aa).

Forms homooligomers. Forms heterooligomers with SCUBE1 and SCUBE2. Interacts with TGFBR2 through the CUB domain; this interaction does not affect TGFB1-binding to TGFBR2. Interacts with BMP2, BMP4 and BMP7; the interaction is mediated by the CUB domain. Interacts with BMPR1A, BMPR1B and BMPR2; the interaction with BMPR1A and BMPR1B is BMP2- and BMP4-dependent. N-glycosylated. Post-translationally, proteolytic cleavage produces a CUB-containing C-terminal fragment that retains the ability to bind to TGFBR2. This reaction is catalyzed in vitro by MMP2 and, to a lesser extent, by MMP9. In terms of tissue distribution, highly expressed in femur and humerus with little or no expression in non-bone tissues.

The protein localises to the secreted. The protein resides in the cell surface. Is a positive regulator of the BMP signaling pathway, required for proper chondrogenesis, osteogenesis and skeletal development. It acts as a coreceptor for BMP ligands, particularly BMP2 and BMP4, facilitating their interactions with BMP type I receptors. It is required for ligand-induced recruitment of BMP receptors to lipid rafts. Binds to TGFBR2 and activates TGFB signaling. This chain is Signal peptide, CUB and EGF-like domain-containing protein 3, found in Mus musculus (Mouse).